The chain runs to 2215 residues: Unconventional myosin-VIIa (2215 aa).

The region spanning 65 to 741 (HGVEDMIRLG…HDMLLEVERD (677 aa)) is the Myosin motor domain. 158 to 165 (GESGAGKT) serves as a coordination point for ATP. The actin-binding stretch occupies residues 632-639 (FVRCIKPN). IQ domains lie at 745-765 (TDRVILLQKVIRGFKDRSNFL), 768-788 (KNAATLIQRHWRGHNCRKNYG), 791-811 (RLGFLRLQALHRSRKLHQQYR), 814-834 (RQRIIQFQARCRAYLVRKAFR), and 837-857 (LWAVLTVQAYARGMIARRLHQ). The tract at residues 858–935 (RLRAEYLWRL…LEQMERARHE (78 aa)) is SAH. A MyTH4 1 domain is found at 1017 to 1253 (YTRRPLKQPL…PSWLELQATK (237 aa)). The 345-residue stretch at 1258–1602 (IMLPVTFMDG…LVVTFLEGLR (345 aa)) folds into the FERM 1 domain. Serine 1569 is modified (phosphoserine). At threonine 1571 the chain carries Phosphothreonine. The SH3 domain maps to 1603-1672 (KRSKYVVALQ…PTDSVYVMPT (70 aa)). In terms of domain architecture, MyTH4 2 spans 1747 to 1896 (HTREPLKQAL…PHLVEVEAIQ (150 aa)). One can recognise an FERM 2 domain in the interval 1902–2205 (IFHKVYFPDD…SYISQMLTAM (304 aa)).

Belongs to the TRAFAC class myosin-kinesin ATPase superfamily. Myosin family. As to quaternary structure, might homodimerize in a two headed molecule through the formation of a coiled-coil rod. Identified in a complex with USH1C and USH1G. Interacts with MYRIP. Interacts with RPE65. Interacts with CIB2. May interact with CALM. Interacts with WHRN. Interacts with PLEKHB1 (via PH domain). Interacts with PCDH15. Interacts with TWF2. Interacts with USH1G. Interacts with MYH9. Interacts (via MyTH4-FERM domains) with cytoplasmic regions of ADGRV1 and USH2A. Interacts with PDZD7 (via MyTH4-FERM domains). Interacts with CALML4. As to expression, expressed in the pigment epithelium and the photoreceptor cells of the retina. Also found in kidney, liver, testis, cochlea, lymphocytes. Not expressed in brain.

It localises to the cytoplasm. The protein localises to the cell cortex. The protein resides in the cytoskeleton. Its subcellular location is the synapse. ATP hydrolysis is inhibited by Mg(2+), already at a concentration of 0.4 mM. Its function is as follows. Myosins are actin-based motor molecules with ATPase activity. Unconventional myosins serve in intracellular movements. Their highly divergent tails bind to membranous compartments, which are then moved relative to actin filaments. In the retina, plays an important role in the renewal of the outer photoreceptor disks. Plays an important role in the distribution and migration of retinal pigment epithelial (RPE) melanosomes and phagosomes, and in the regulation of opsin transport in retinal photoreceptors. In the inner ear, plays an important role in differentiation, morphogenesis and organization of cochlear hair cell bundles. Involved in hair-cell vesicle trafficking of aminoglycosides, which are known to induce ototoxicity. Motor protein that is a part of the functional network formed by USH1C, USH1G, CDH23 and MYO7A that mediates mechanotransduction in cochlear hair cells. Required for normal hearing. The chain is Unconventional myosin-VIIa from Homo sapiens (Human).